Reading from the N-terminus, the 143-residue chain is MDQTLSGFGNVFVFLALGIVFVAGGYLTARMLRPSRPNPEKNSTYECGEEAVGSAWVKFNIRFYVVALIFIIFDVEVVFLYPWATVFKQLGEFALFEALVFAGILILGLAYAWVKGDLDWVRPTPNIPKMPELPAGKPDGSRG.

A run of 3 helical transmembrane segments spans residues Gly7–Leu27, Phe63–Trp83, and Phe93–Trp113.

It belongs to the complex I subunit 3 family. As to quaternary structure, NDH-1 is composed of 14 different subunits. Subunits NuoA, H, J, K, L, M, N constitute the membrane sector of the complex.

The protein localises to the cell inner membrane. The enzyme catalyses a quinone + NADH + 5 H(+)(in) = a quinol + NAD(+) + 4 H(+)(out). Its function is as follows. NDH-1 shuttles electrons from NADH, via FMN and iron-sulfur (Fe-S) centers, to quinones in the respiratory chain. The immediate electron acceptor for the enzyme in this species is believed to be a menaquinone. Couples the redox reaction to proton translocation (for every two electrons transferred, four hydrogen ions are translocated across the cytoplasmic membrane), and thus conserves the redox energy in a proton gradient. The sequence is that of NADH-quinone oxidoreductase subunit A from Chlorobium limicola (strain DSM 245 / NBRC 103803 / 6330).